A 261-amino-acid chain; its full sequence is Leucine-rich repeat-containing protein 61 (261 aa).

LRR repeat units lie at residues 54–75, 76–97, and 98–119; these read GLEW…ASLR, QLAV…AACE, and NLQC…QCLA. An LRRCT domain is found at 138–183; the sequence is NPLCASPCYWASVRELLPGLKVLDGERVSGRGSDFYQLCRDLDSSL.

The sequence is that of Leucine-rich repeat-containing protein 61 (LRRC61) from Bos taurus (Bovine).